Consider the following 96-residue polypeptide: YcgL domain-containing protein VS_0884 (96 aa).

Positions 1-84 (MLCSIYKSSK…PPVNELELHK (84 aa)) constitute a YcgL domain.

This is YcgL domain-containing protein VS_0884 from Vibrio atlanticus (strain LGP32) (Vibrio splendidus (strain Mel32)).